We begin with the raw amino-acid sequence, 758 residues long: Vitamin K-dependent gamma-carboxylase (758 aa).

The disordered stretch occupies residues 1–21 (MAVSARSARTSPGSDKVQKDK). Ala-2 is modified (N-acetylalanine). Over 2 to 60 (AVSARSARTSPGSDKVQKDKAELISGPRQDSLMGKLLGFEWTDLSSWRRLVTLLNRPTD) the chain is Cytoplasmic. A helical membrane pass occupies residues 61 to 81 (PASLAVFRFLFGFLMVLDIPQ). Topologically, residues 82–113 (ERGLSSLDRKYLDGLDVCRFPLLDALRPLPLD) are lumenal. Residues Cys-99 and Cys-450 are joined by a disulfide bond. The chain crosses the membrane as a helical span at residues 114-134 (WMYLVYTIMFLGALGMMLGLC). The Cytoplasmic portion of the chain corresponds to 135–136 (YR). Residues 137 to 157 (ISCVLFLLPYWYVFLLDKTSW) traverse the membrane as a helical segment. Residues 158–292 (NNHSYLYGLL…VSYFHCMNSQ (135 aa)) are Lumenal-facing. The chain crosses the membrane as a helical span at residues 293-313 (LFSIGMFSYVMLASSPLFCSP). At 314–361 (EWPRKLVSYCPQRLQELLPLKAAPQPSVSCVYKRSRGKSGQKPGLRHQ) the chain is on the cytoplasmic side. A helical membrane pass occupies residues 362–382 (LGAAFTLLYLLEQLFLPYSHF). The Lumenal segment spans residues 383–758 (LTQGYNNWTN…SNPDPVHSEF (376 aa)). A disordered region spans residues 732 to 758 (GELSPSNMDSSHSNPPESNPDPVHSEF). Residues 735–747 (SPSNMDSSHSNPP) show a composition bias toward polar residues.

It belongs to the vitamin K-dependent gamma-carboxylase family. As to quaternary structure, monomer. May interact with CALU.

The protein localises to the endoplasmic reticulum membrane. It catalyses the reaction 4-carboxy-L-glutamyl-[protein] + 2,3-epoxyphylloquinone + H2O + H(+) = phylloquinol + L-glutamyl-[protein] + CO2 + O2. Mediates the vitamin K-dependent carboxylation of glutamate residues to calcium-binding gamma-carboxyglutamate (Gla) residues with the concomitant conversion of the reduced hydroquinone form of vitamin K to vitamin K epoxide. Catalyzes gamma-carboxylation of various proteins, such as blood coagulation factors (F2, F7, F9 and F10), osteocalcin (BGLAP) or matrix Gla protein (MGP). This Pongo abelii (Sumatran orangutan) protein is Vitamin K-dependent gamma-carboxylase (GGCX).